The chain runs to 458 residues: ATP synthase subunit beta (458 aa).

ATP is bound at residue 148–155 (GGAGVGKT).

It belongs to the ATPase alpha/beta chains family. F-type ATPases have 2 components, CF(1) - the catalytic core - and CF(0) - the membrane proton channel. CF(1) has five subunits: alpha(3), beta(3), gamma(1), delta(1), epsilon(1). CF(0) has three main subunits: a(1), b(2) and c(9-12). The alpha and beta chains form an alternating ring which encloses part of the gamma chain. CF(1) is attached to CF(0) by a central stalk formed by the gamma and epsilon chains, while a peripheral stalk is formed by the delta and b chains.

The protein localises to the cell inner membrane. The catalysed reaction is ATP + H2O + 4 H(+)(in) = ADP + phosphate + 5 H(+)(out). In terms of biological role, produces ATP from ADP in the presence of a proton gradient across the membrane. The catalytic sites are hosted primarily by the beta subunits. This Francisella tularensis subsp. novicida (strain U112) protein is ATP synthase subunit beta.